The primary structure comprises 657 residues: Putative GreA-associated domains protein (657 aa).

The region spanning 1–152 (MDTRDLTAYS…EQEGNKEKAT (152 aa)) is the GRAD2 domain. In terms of domain architecture, GRAD1 spans 153–657 (EFYKKALYRF…TAGSFGTLWE (505 aa)).

The polypeptide is Putative GreA-associated domains protein (Treponema pallidum (strain Nichols)).